The sequence spans 138 residues: Small ribosomal subunit protein uS11c (138 aa).

The disordered stretch occupies residues 1-23; sequence MAKPIQRIGSRRNGPIGSRKNGR.

This sequence belongs to the universal ribosomal protein uS11 family. As to quaternary structure, part of the 30S ribosomal subunit.

The protein resides in the plastid. Its subcellular location is the chloroplast. The polypeptide is Small ribosomal subunit protein uS11c (Platanus occidentalis (Sycamore)).